Reading from the N-terminus, the 98-residue chain is NADH-ubiquinone oxidoreductase chain 4L (98 aa).

3 consecutive transmembrane segments (helical) span residues 1–21, 28–48, and 61–81; these read MASINLNIIMAFIMALMGVLI, STLLCLEGMMLSLFILVTLLI, and LILLVFSACEAGVGLALLVTI.

Belongs to the complex I subunit 4L family. In terms of assembly, core subunit of respiratory chain NADH dehydrogenase (Complex I) which is composed of 45 different subunits.

It is found in the mitochondrion inner membrane. It carries out the reaction a ubiquinone + NADH + 5 H(+)(in) = a ubiquinol + NAD(+) + 4 H(+)(out). In terms of biological role, core subunit of the mitochondrial membrane respiratory chain NADH dehydrogenase (Complex I) which catalyzes electron transfer from NADH through the respiratory chain, using ubiquinone as an electron acceptor. Part of the enzyme membrane arm which is embedded in the lipid bilayer and involved in proton translocation. This Thylamys elegans (Elegant fat-tailed mouse opossum) protein is NADH-ubiquinone oxidoreductase chain 4L (MT-ND4L).